A 312-amino-acid chain; its full sequence is uncharacterized protein (312 aa).

This is an uncharacterized protein from Mycoplasma (Bacteriophage L2).